A 243-amino-acid polypeptide reads, in one-letter code: DNA repair protein RecO (243 aa).

This sequence belongs to the RecO family.

Involved in DNA repair and RecF pathway recombination. In Geobacter sulfurreducens (strain ATCC 51573 / DSM 12127 / PCA), this protein is DNA repair protein RecO.